The sequence spans 539 residues: MIO-dependent tyrosine 2,3-aminomutase (539 aa).

Tyrosine 63 serves as the catalytic Proton donor/acceptor. Position 93 (histidine 93) interacts with substrate. The segment at residues alanine 152 to glycine 154 is a cross-link (5-imidazolinone (Ala-Gly)). The residue at position 153 (serine 153) is a 2,3-didehydroalanine (Ser). The substrate site is built by asparagine 205 and arginine 311.

This sequence belongs to the TAL/TAM family. In terms of assembly, homotetramer; dimer of dimers. Post-translationally, contains an active site 4-methylidene-imidazol-5-one (MIO), which is formed autocatalytically by cyclization and dehydration of residues Ala-Ser-Gly.

The enzyme catalyses L-tyrosine = 3-amino-3-(4-hydroxyphenyl)propanoate. It carries out the reaction L-tyrosine = (E)-4-coumarate + NH4(+). Involved in the biosynthesis of the enediyne antitumor antibiotic C-1027. Catalyzes the MIO-dependent deamination of L-tyrosine generating the corresponding alpha,beta-unsaturated acid, (S)-beta-tyrosine. The chain is MIO-dependent tyrosine 2,3-aminomutase from Streptomyces globisporus.